Here is a 136-residue protein sequence, read N- to C-terminus: Large-conductance mechanosensitive channel (136 aa).

The Cytoplasmic segment spans residues 1 to 16 (MGLLSEFKAFAVKGNV). Residues 17 to 45 (VDMAVGIIIGAAFGKIVSSFVGDVIMPPI) traverse the membrane as a helical segment. Residues 46–73 (GLLIGGVDFSDLAITLKAEGDVPAVVLA) are Extracellular-facing. A helical membrane pass occupies residues 74 to 93 (YRKFIQTVLNFVIVAFAIFM). At 94–136 (GVKAINRLKREEAVAPSEPPVPSAEETLLTEIRDLLKAQQNKS) the chain is on the cytoplasmic side.

It belongs to the MscL family. In terms of assembly, homopentamer.

Its subcellular location is the cell inner membrane. Its function is as follows. Channel that opens in response to stretch forces in the membrane lipid bilayer. Forms a nonselective ion channel with a conductance of about 4 nanosiemens. May participate in the regulation of osmotic pressure changes within the cell. This Pseudomonas fluorescens protein is Large-conductance mechanosensitive channel.